A 251-amino-acid polypeptide reads, in one-letter code: uncharacterized protein (251 aa).

The protein belongs to the methyltransferase superfamily.

It is found in the cytoplasm. The protein localises to the nucleus. Functionally, probable methyltransferase. This is an uncharacterized protein from Schizosaccharomyces pombe (strain 972 / ATCC 24843) (Fission yeast).